A 1346-amino-acid polypeptide reads, in one-letter code: DNA-directed RNA polymerase subunit beta (1346 aa).

It belongs to the RNA polymerase beta chain family. As to quaternary structure, the RNAP catalytic core consists of 2 alpha, 1 beta, 1 beta' and 1 omega subunit. When a sigma factor is associated with the core the holoenzyme is formed, which can initiate transcription.

The enzyme catalyses RNA(n) + a ribonucleoside 5'-triphosphate = RNA(n+1) + diphosphate. DNA-dependent RNA polymerase catalyzes the transcription of DNA into RNA using the four ribonucleoside triphosphates as substrates. This chain is DNA-directed RNA polymerase subunit beta, found in Psychromonas ingrahamii (strain DSM 17664 / CCUG 51855 / 37).